We begin with the raw amino-acid sequence, 282 residues long: Bis(5'-nucleosyl)-tetraphosphatase, symmetrical (282 aa).

This sequence belongs to the Ap4A hydrolase family.

It catalyses the reaction P(1),P(4)-bis(5'-adenosyl) tetraphosphate + H2O = 2 ADP + 2 H(+). In terms of biological role, hydrolyzes diadenosine 5',5'''-P1,P4-tetraphosphate to yield ADP. This Escherichia coli O81 (strain ED1a) protein is Bis(5'-nucleosyl)-tetraphosphatase, symmetrical.